We begin with the raw amino-acid sequence, 404 residues long: Glucose-1-phosphate adenylyltransferase 2 (404 aa).

Residues Tyr97, Gly162, 177–178 (EK), and Ser195 contribute to the alpha-D-glucose 1-phosphate site.

It belongs to the bacterial/plant glucose-1-phosphate adenylyltransferase family. Homotetramer.

It catalyses the reaction alpha-D-glucose 1-phosphate + ATP + H(+) = ADP-alpha-D-glucose + diphosphate. The protein operates within glycan biosynthesis; glycogen biosynthesis. Its function is as follows. Involved in the biosynthesis of ADP-glucose, a building block required for the elongation reactions to produce glycogen. Catalyzes the reaction between ATP and alpha-D-glucose 1-phosphate (G1P) to produce pyrophosphate and ADP-Glc. This is Glucose-1-phosphate adenylyltransferase 2 from Vibrio vulnificus (strain CMCP6).